We begin with the raw amino-acid sequence, 177 residues long: Large ribosomal subunit protein uL6 (177 aa).

This sequence belongs to the universal ribosomal protein uL6 family. As to quaternary structure, part of the 50S ribosomal subunit.

In terms of biological role, this protein binds to the 23S rRNA, and is important in its secondary structure. It is located near the subunit interface in the base of the L7/L12 stalk, and near the tRNA binding site of the peptidyltransferase center. This chain is Large ribosomal subunit protein uL6, found in Rickettsia rickettsii (strain Iowa).